Reading from the N-terminus, the 292-residue chain is Hydroxysqualene synthase (292 aa).

It belongs to the phytoene/squalene synthase family. HpnC subfamily.

It catalyses the reaction presqualene diphosphate + H2O = hydroxysqualene + diphosphate. The protein operates within secondary metabolite biosynthesis; hopanoid biosynthesis. Its function is as follows. Involved in the biosynthesis of the hopanoid precursor squalene (SQ) from farnesyl diphosphate (FPP). Catalyzes the second step, the conversion of presqualene diphosphate (PSPP) to hydroxysqualene (HSQ). The chain is Hydroxysqualene synthase from Rhodopseudomonas palustris (strain ATCC BAA-98 / CGA009).